Here is a 207-residue protein sequence, read N- to C-terminus: Large ribosomal subunit protein uL4 (207 aa).

The tract at residues 49–78 is disordered; the sequence is HAVKNRSAVRGGGRKPWRQKGTGRARQGSI. Positions 60–71 are enriched in basic residues; it reads GGRKPWRQKGTG.

Belongs to the universal ribosomal protein uL4 family. As to quaternary structure, part of the 50S ribosomal subunit.

Functionally, one of the primary rRNA binding proteins, this protein initially binds near the 5'-end of the 23S rRNA. It is important during the early stages of 50S assembly. It makes multiple contacts with different domains of the 23S rRNA in the assembled 50S subunit and ribosome. Forms part of the polypeptide exit tunnel. The sequence is that of Large ribosomal subunit protein uL4 from Enterococcus faecalis (strain ATCC 700802 / V583).